A 112-amino-acid polypeptide reads, in one-letter code: uncharacterized protein (112 aa).

This is an uncharacterized protein from Saccharomyces cerevisiae (strain ATCC 204508 / S288c) (Baker's yeast).